A 211-amino-acid chain; its full sequence is 3-demethoxyubiquinol 3-hydroxylase (211 aa).

The segment at 22–43 (KHPLNPNRKSPSANTVDGQLSD) is disordered. Residues 28-42 (NRKSPSANTVDGQLS) are compositionally biased toward polar residues. Fe cation-binding residues include Glu-60, Glu-90, His-93, Glu-142, Glu-174, and His-177.

The protein belongs to the COQ7 family. Fe cation is required as a cofactor.

It localises to the cell membrane. It carries out the reaction a 5-methoxy-2-methyl-3-(all-trans-polyprenyl)benzene-1,4-diol + AH2 + O2 = a 3-demethylubiquinol + A + H2O. Its pathway is cofactor biosynthesis; ubiquinone biosynthesis. Functionally, catalyzes the hydroxylation of 2-nonaprenyl-3-methyl-6-methoxy-1,4-benzoquinol during ubiquinone biosynthesis. The chain is 3-demethoxyubiquinol 3-hydroxylase from Francisella philomiragia subsp. philomiragia (strain ATCC 25017 / CCUG 19701 / FSC 153 / O#319-036).